An 87-amino-acid polypeptide reads, in one-letter code: Phosphoribosyl-ATP pyrophosphatase (87 aa).

Belongs to the PRA-PH family.

It localises to the cytoplasm. It catalyses the reaction 1-(5-phospho-beta-D-ribosyl)-ATP + H2O = 1-(5-phospho-beta-D-ribosyl)-5'-AMP + diphosphate + H(+). It functions in the pathway amino-acid biosynthesis; L-histidine biosynthesis; L-histidine from 5-phospho-alpha-D-ribose 1-diphosphate: step 2/9. The protein is Phosphoribosyl-ATP pyrophosphatase of Nocardia farcinica (strain IFM 10152).